Reading from the N-terminus, the 123-residue chain is Ribosome-binding factor A (123 aa).

This sequence belongs to the RbfA family. In terms of assembly, monomer. Binds 30S ribosomal subunits, but not 50S ribosomal subunits or 70S ribosomes.

It is found in the cytoplasm. One of several proteins that assist in the late maturation steps of the functional core of the 30S ribosomal subunit. Associates with free 30S ribosomal subunits (but not with 30S subunits that are part of 70S ribosomes or polysomes). Required for efficient processing of 16S rRNA. May interact with the 5'-terminal helix region of 16S rRNA. In Lactobacillus gasseri (strain ATCC 33323 / DSM 20243 / BCRC 14619 / CIP 102991 / JCM 1131 / KCTC 3163 / NCIMB 11718 / NCTC 13722 / AM63), this protein is Ribosome-binding factor A.